The chain runs to 391 residues: GTPase Obg (391 aa).

Positions 1-159 (MKFVDEARIL…RELMLELMLL (159 aa)) constitute an Obg domain. The region spanning 160 to 333 (ADVGMLGMPN…LCWDIMEFMK (174 aa)) is the OBG-type G domain. GTP-binding positions include 166 to 173 (GMPNAGKS), 191 to 195 (FTTLV), 213 to 216 (DIPG), 283 to 286 (NKVD), and 314 to 316 (SAI). 2 residues coordinate Mg(2+): serine 173 and threonine 193.

Belongs to the TRAFAC class OBG-HflX-like GTPase superfamily. OBG GTPase family. In terms of assembly, monomer. Mg(2+) serves as cofactor.

It is found in the cytoplasm. Functionally, an essential GTPase which binds GTP, GDP and possibly (p)ppGpp with moderate affinity, with high nucleotide exchange rates and a fairly low GTP hydrolysis rate. Plays a role in control of the cell cycle, stress response, ribosome biogenesis and in those bacteria that undergo differentiation, in morphogenesis control. In Photorhabdus laumondii subsp. laumondii (strain DSM 15139 / CIP 105565 / TT01) (Photorhabdus luminescens subsp. laumondii), this protein is GTPase Obg.